A 430-amino-acid chain; its full sequence is Bifunctional protein GlmU (430 aa).

A pyrophosphorylase region spans residues M1–R227. UDP-N-acetyl-alpha-D-glucosamine contacts are provided by residues K25, Q74, G79 to T80, Y104 to D106, G140, E154, N168, and N225. D106 is a Mg(2+) binding site. N225 serves as a coordination point for Mg(2+). Positions N228–S248 are linker. The tract at residues G249–K430 is N-acetyltransferase. UDP-N-acetyl-alpha-D-glucosamine contacts are provided by R314 and K332. Residue H344 is the Proton acceptor of the active site. Residues Y347 and N358 each contribute to the UDP-N-acetyl-alpha-D-glucosamine site. Acetyl-CoA is bound by residues A361, N367–Y368, A404, and R421.

The protein in the N-terminal section; belongs to the N-acetylglucosamine-1-phosphate uridyltransferase family. This sequence in the C-terminal section; belongs to the transferase hexapeptide repeat family. Homotrimer. Mg(2+) is required as a cofactor.

The protein localises to the cytoplasm. It catalyses the reaction alpha-D-glucosamine 1-phosphate + acetyl-CoA = N-acetyl-alpha-D-glucosamine 1-phosphate + CoA + H(+). The enzyme catalyses N-acetyl-alpha-D-glucosamine 1-phosphate + UTP + H(+) = UDP-N-acetyl-alpha-D-glucosamine + diphosphate. Its pathway is nucleotide-sugar biosynthesis; UDP-N-acetyl-alpha-D-glucosamine biosynthesis; N-acetyl-alpha-D-glucosamine 1-phosphate from alpha-D-glucosamine 6-phosphate (route II): step 2/2. It functions in the pathway nucleotide-sugar biosynthesis; UDP-N-acetyl-alpha-D-glucosamine biosynthesis; UDP-N-acetyl-alpha-D-glucosamine from N-acetyl-alpha-D-glucosamine 1-phosphate: step 1/1. The protein operates within bacterial outer membrane biogenesis; LPS lipid A biosynthesis. In terms of biological role, catalyzes the last two sequential reactions in the de novo biosynthetic pathway for UDP-N-acetylglucosamine (UDP-GlcNAc). The C-terminal domain catalyzes the transfer of acetyl group from acetyl coenzyme A to glucosamine-1-phosphate (GlcN-1-P) to produce N-acetylglucosamine-1-phosphate (GlcNAc-1-P), which is converted into UDP-GlcNAc by the transfer of uridine 5-monophosphate (from uridine 5-triphosphate), a reaction catalyzed by the N-terminal domain. The sequence is that of Bifunctional protein GlmU from Wolbachia pipientis wMel.